The following is a 422-amino-acid chain: Serine--tRNA ligase (422 aa).

Residue 229–231 coordinates L-serine; that stretch reads TAE. Residue 260 to 262 participates in ATP binding; sequence RKE. Glu283 serves as a coordination point for L-serine. Residue 347–350 coordinates ATP; that stretch reads EISS. Residue Ser383 participates in L-serine binding.

Belongs to the class-II aminoacyl-tRNA synthetase family. Type-1 seryl-tRNA synthetase subfamily. Homodimer. The tRNA molecule binds across the dimer.

The protein localises to the cytoplasm. It catalyses the reaction tRNA(Ser) + L-serine + ATP = L-seryl-tRNA(Ser) + AMP + diphosphate + H(+). It carries out the reaction tRNA(Sec) + L-serine + ATP = L-seryl-tRNA(Sec) + AMP + diphosphate + H(+). It functions in the pathway aminoacyl-tRNA biosynthesis; selenocysteinyl-tRNA(Sec) biosynthesis; L-seryl-tRNA(Sec) from L-serine and tRNA(Sec): step 1/1. Functionally, catalyzes the attachment of serine to tRNA(Ser). Is also able to aminoacylate tRNA(Sec) with serine, to form the misacylated tRNA L-seryl-tRNA(Sec), which will be further converted into selenocysteinyl-tRNA(Sec). The sequence is that of Serine--tRNA ligase from Natranaerobius thermophilus (strain ATCC BAA-1301 / DSM 18059 / JW/NM-WN-LF).